A 572-amino-acid polypeptide reads, in one-letter code: uncharacterized protein (572 aa).

A disordered region spans residues 13–45 (ALIAKPKGKTVSGDGADPKKRGRPKKNATEPAV). The stretch at 177–204 (VLTKEMEEKLEALDRDMRTAEETKVSIA) forms a coiled coil.

This is an uncharacterized protein from Dryophytes versicolor (chameleon treefrog).